We begin with the raw amino-acid sequence, 252 residues long: Phosphoglycolate phosphatase (252 aa).

The active-site Nucleophile is D13. The Mg(2+) site is built by D13, D15, and D192.

It belongs to the HAD-like hydrolase superfamily. CbbY/CbbZ/Gph/YieH family. In terms of assembly, monomer. Mg(2+) serves as cofactor. The cofactor is chloride.

The catalysed reaction is 2-phosphoglycolate + H2O = glycolate + phosphate. It participates in organic acid metabolism; glycolate biosynthesis; glycolate from 2-phosphoglycolate: step 1/1. Functionally, specifically catalyzes the dephosphorylation of 2-phosphoglycolate. Is involved in the dissimilation of the intracellular 2-phosphoglycolate formed during the DNA repair of 3'-phosphoglycolate ends, a major class of DNA lesions induced by oxidative stress. The polypeptide is Phosphoglycolate phosphatase (Shigella sonnei (strain Ss046)).